The sequence spans 275 residues: 2,3,4,5-tetrahydropyridine-2,6-dicarboxylate N-succinyltransferase (275 aa).

This sequence belongs to the transferase hexapeptide repeat family.

Its subcellular location is the cytoplasm. It carries out the reaction (S)-2,3,4,5-tetrahydrodipicolinate + succinyl-CoA + H2O = (S)-2-succinylamino-6-oxoheptanedioate + CoA. It participates in amino-acid biosynthesis; L-lysine biosynthesis via DAP pathway; LL-2,6-diaminopimelate from (S)-tetrahydrodipicolinate (succinylase route): step 1/3. This is 2,3,4,5-tetrahydropyridine-2,6-dicarboxylate N-succinyltransferase from Ralstonia pickettii (strain 12J).